We begin with the raw amino-acid sequence, 501 residues long: Probable cytosol aminopeptidase (501 aa).

2 residues coordinate Mn(2+): K268 and D273. The active site involves K280. Positions 291, 350, and 352 each coordinate Mn(2+). The active site involves R354.

Belongs to the peptidase M17 family. The cofactor is Mn(2+).

It localises to the cytoplasm. It carries out the reaction Release of an N-terminal amino acid, Xaa-|-Yaa-, in which Xaa is preferably Leu, but may be other amino acids including Pro although not Arg or Lys, and Yaa may be Pro. Amino acid amides and methyl esters are also readily hydrolyzed, but rates on arylamides are exceedingly low.. The enzyme catalyses Release of an N-terminal amino acid, preferentially leucine, but not glutamic or aspartic acids.. Its function is as follows. Presumably involved in the processing and regular turnover of intracellular proteins. Catalyzes the removal of unsubstituted N-terminal amino acids from various peptides. The chain is Probable cytosol aminopeptidase from Colwellia psychrerythraea (strain 34H / ATCC BAA-681) (Vibrio psychroerythus).